A 393-amino-acid polypeptide reads, in one-letter code: MVTPKLHLDLSLTKKMKDHIHEHDHMVQICGEVSSGETSLVGIKKTCGEAPCGFSDAKTSSIEAQERAASMRKLLIAVLLCAIFIVVEVVGGIKANSLAILTDAAHLLSDVAAFAISLFSLWASGWKANPQQSYGFFRIEILGALVSIQMIWLLAGILVYEAIVRLNNGSGEVEGSLMFAVSAVGLLVNIAMAILLGHDHGHGHGHSHDNGHGHSHDHGHGIAATEHHHDSGHDESQLSDVLIEQKKQRNVNIQGAYLHVLGDSIQSVGVMIGGAIIWYKPEWKILDLICTLVFSVIVLGTTIGMLRNILEVLMESTPREIDPTMLEKGVCEIEEVVAVHELHIWAITVGKLLLACHVKIRPEAEADMVLDKIIDYIKREHNISHVTIQIERQ.

Topologically, residues 1–72 (MVTPKLHLDL…EAQERAASMR (72 aa)) are cytoplasmic. Residues 73–93 (KLLIAVLLCAIFIVVEVVGGI) form a helical membrane-spanning segment. Over 94–105 (KANSLAILTDAA) the chain is Vacuolar. The helical transmembrane segment at 106–126 (HLLSDVAAFAISLFSLWASGW) threads the bilayer. Residues 127–138 (KANPQQSYGFFR) are Cytoplasmic-facing. A helical membrane pass occupies residues 139-159 (IEILGALVSIQMIWLLAGILV). Topologically, residues 160-176 (YEAIVRLNNGSGEVEGS) are vacuolar. The chain crosses the membrane as a helical span at residues 177–197 (LMFAVSAVGLLVNIAMAILLG). A required for zinc-binding region spans residues 198-233 (HDHGHGHGHSHDNGHGHSHDHGHGIAATEHHHDSGH). Residues 198–257 (HDHGHGHGHSHDNGHGHSHDHGHGIAATEHHHDSGHDESQLSDVLIEQKKQRNVNIQGAY) lie on the Cytoplasmic side of the membrane. Basic and acidic residues predominate over residues 202 to 236 (HGHGHSHDNGHGHSHDHGHGIAATEHHHDSGHDES). Residues 202-237 (HGHGHSHDNGHGHSHDHGHGIAATEHHHDSGHDESQ) form a disordered region. The helical transmembrane segment at 258 to 278 (LHVLGDSIQSVGVMIGGAIIW) threads the bilayer. The Vacuolar portion of the chain corresponds to 279 to 284 (YKPEWK). A helical transmembrane segment spans residues 285 to 305 (ILDLICTLVFSVIVLGTTIGM). The Cytoplasmic portion of the chain corresponds to 306 to 393 (LRNILEVLME…SHVTIQIERQ (88 aa)).

The protein belongs to the cation diffusion facilitator (CDF) transporter (TC 2.A.4) family. SLC30A subfamily.

Its subcellular location is the membrane. Involved in sequestration of excess zinc in the cytoplasm into vacuoles to maintain zinc homeostasis. The chain is Metal tolerance protein A2 (MTPA2) from Arabidopsis thaliana (Mouse-ear cress).